The primary structure comprises 371 residues: Histidinol-phosphate aminotransferase (371 aa).

Lys228 carries the N6-(pyridoxal phosphate)lysine modification.

Belongs to the class-II pyridoxal-phosphate-dependent aminotransferase family. Histidinol-phosphate aminotransferase subfamily. Pyridoxal 5'-phosphate is required as a cofactor.

It catalyses the reaction L-histidinol phosphate + 2-oxoglutarate = 3-(imidazol-4-yl)-2-oxopropyl phosphate + L-glutamate. It functions in the pathway amino-acid biosynthesis; L-histidine biosynthesis; L-histidine from 5-phospho-alpha-D-ribose 1-diphosphate: step 7/9. The sequence is that of Histidinol-phosphate aminotransferase from Methanococcus maripaludis (strain C5 / ATCC BAA-1333).